We begin with the raw amino-acid sequence, 230 residues long: Small ribosomal subunit protein uS3 (230 aa).

One can recognise a KH type-2 domain in the interval 39-107; that stretch reads VRKFLVEKLQ…PAQINIAEIR (69 aa).

Belongs to the universal ribosomal protein uS3 family. Part of the 30S ribosomal subunit. Forms a tight complex with proteins S10 and S14.

Its function is as follows. Binds the lower part of the 30S subunit head. Binds mRNA in the 70S ribosome, positioning it for translation. The sequence is that of Small ribosomal subunit protein uS3 from Shewanella putrefaciens (strain CN-32 / ATCC BAA-453).